A 513-amino-acid polypeptide reads, in one-letter code: ATP synthase subunit alpha (513 aa).

Residue 169–176 (GDRQTGKT) participates in ATP binding.

It belongs to the ATPase alpha/beta chains family. As to quaternary structure, F-type ATPases have 2 components, CF(1) - the catalytic core - and CF(0) - the membrane proton channel. CF(1) has five subunits: alpha(3), beta(3), gamma(1), delta(1), epsilon(1). CF(0) has three main subunits: a(1), b(2) and c(9-12). The alpha and beta chains form an alternating ring which encloses part of the gamma chain. CF(1) is attached to CF(0) by a central stalk formed by the gamma and epsilon chains, while a peripheral stalk is formed by the delta and b chains.

The protein localises to the cell inner membrane. The catalysed reaction is ATP + H2O + 4 H(+)(in) = ADP + phosphate + 5 H(+)(out). Functionally, produces ATP from ADP in the presence of a proton gradient across the membrane. The alpha chain is a regulatory subunit. The polypeptide is ATP synthase subunit alpha (Shewanella oneidensis (strain ATCC 700550 / JCM 31522 / CIP 106686 / LMG 19005 / NCIMB 14063 / MR-1)).